The following is a 463-amino-acid chain: UDP-N-acetylmuramate--L-alanine ligase (463 aa).

Residue 112-118 (GTHGKTT) coordinates ATP.

Belongs to the MurCDEF family.

The protein localises to the cytoplasm. It catalyses the reaction UDP-N-acetyl-alpha-D-muramate + L-alanine + ATP = UDP-N-acetyl-alpha-D-muramoyl-L-alanine + ADP + phosphate + H(+). Its pathway is cell wall biogenesis; peptidoglycan biosynthesis. Cell wall formation. In Dechloromonas aromatica (strain RCB), this protein is UDP-N-acetylmuramate--L-alanine ligase.